Here is a 324-residue protein sequence, read N- to C-terminus: Fructose-1,6-bisphosphatase class 1 (324 aa).

The Mg(2+) site is built by Glu-88, Asp-107, Leu-109, and Asp-110. Substrate is bound by residues 110 to 113 (DGSS), Asn-199, and Lys-265. Mg(2+) is bound at residue Glu-271.

This sequence belongs to the FBPase class 1 family. Homotetramer. The cofactor is Mg(2+).

Its subcellular location is the cytoplasm. The catalysed reaction is beta-D-fructose 1,6-bisphosphate + H2O = beta-D-fructose 6-phosphate + phosphate. It functions in the pathway carbohydrate biosynthesis; gluconeogenesis. The polypeptide is Fructose-1,6-bisphosphatase class 1 (Neisseria gonorrhoeae (strain ATCC 700825 / FA 1090)).